The sequence spans 75 residues: Large ribosomal subunit protein bL31 (75 aa).

Zn(2+)-binding residues include Cys-16, Cys-18, Cys-36, and Cys-39.

It belongs to the bacterial ribosomal protein bL31 family. Type A subfamily. As to quaternary structure, part of the 50S ribosomal subunit. Zn(2+) serves as cofactor.

Functionally, binds the 23S rRNA. The polypeptide is Large ribosomal subunit protein bL31 (Desulforapulum autotrophicum (strain ATCC 43914 / DSM 3382 / VKM B-1955 / HRM2) (Desulfobacterium autotrophicum)).